A 146-amino-acid chain; its full sequence is DNA utilization protein HofO (146 aa).

The chain crosses the membrane as a helical span at residues Trp20 to His37.

The protein resides in the cell inner membrane. Functionally, required for the use of extracellular DNA as a nutrient. The sequence is that of DNA utilization protein HofO (hofO) from Escherichia coli (strain K12).